We begin with the raw amino-acid sequence, 137 residues long: Large ribosomal subunit protein uL16 (137 aa).

It belongs to the universal ribosomal protein uL16 family. Part of the 50S ribosomal subunit.

In terms of biological role, binds 23S rRNA and is also seen to make contacts with the A and possibly P site tRNAs. The chain is Large ribosomal subunit protein uL16 from Tolumonas auensis (strain DSM 9187 / NBRC 110442 / TA 4).